The chain runs to 328 residues: Malate dehydrogenase 1 (328 aa).

Residue 12–18 coordinates NAD(+); it reads GAAGQIG. Substrate-binding residues include R95 and R101. Residues N108, Q115, and 132-134 contribute to the NAD(+) site; that span reads VGN. Substrate contacts are provided by N134 and R165. H190 serves as the catalytic Proton acceptor.

It belongs to the LDH/MDH superfamily. MDH type 2 family.

It catalyses the reaction (S)-malate + NAD(+) = oxaloacetate + NADH + H(+). In terms of biological role, catalyzes the reversible oxidation of malate to oxaloacetate. This is Malate dehydrogenase 1 from Albidiferax ferrireducens (strain ATCC BAA-621 / DSM 15236 / T118) (Rhodoferax ferrireducens).